The primary structure comprises 105 residues: Small ribosomal subunit protein uS17 (105 aa).

This sequence belongs to the universal ribosomal protein uS17 family. Part of the 30S ribosomal subunit.

Its function is as follows. One of the primary rRNA binding proteins, it binds specifically to the 5'-end of 16S ribosomal RNA. This Thermus aquaticus protein is Small ribosomal subunit protein uS17.